The following is a 511-amino-acid chain: MDIRPSEISKILKEQIKNFDQKAEVSEIGWVLSVGDGIARVYGLDNVQAGEMVSFSNGVRGMALNLEIDNVGVVIFGSDRDIREGDCVKRLGAIVEVPVGPALLGRVVDALGNPIDGKGPLKATEYRRVDVKAPGIIPRQSVHEPMSTGLKAIDALIPIGRGQRELVIGDRQTGKTAILLDAFLNQKPFHEKDAGNEKDKVYCIYVAIGQKRSTVAQFVKVLEERGALEYSIIVAATASDPAPMQFIAPLAGCAMGEYFRDNGQHALIGYDDLSKQAVAYRQMSLLLRRPPGREAYPGDVFYLHSRLLERAAKLNAENGSGSLTALPVIETQANDVSAYIPTNVISITDGQIFLETNLFYQGIRPAVNVGLSVSRVGSAAQIKAMKQVAGSIKGELAQYREMAAFAQFGSDLDASTQRLLNRGARLTELLKQPQFSPLKTEEQVVVIFAGVNGYLDALAVADVGRFEQGLLTLLRSDHSDLLQAIADQKQLTDDIKDKLIVVLNTYAKNFS.

169–176 (GDRQTGKT) is a binding site for ATP.

It belongs to the ATPase alpha/beta chains family. In terms of assembly, F-type ATPases have 2 components, CF(1) - the catalytic core - and CF(0) - the membrane proton channel. CF(1) has five subunits: alpha(3), beta(3), gamma(1), delta(1), epsilon(1). CF(0) has three main subunits: a(1), b(2) and c(9-12). The alpha and beta chains form an alternating ring which encloses part of the gamma chain. CF(1) is attached to CF(0) by a central stalk formed by the gamma and epsilon chains, while a peripheral stalk is formed by the delta and b chains.

It is found in the cell inner membrane. It carries out the reaction ATP + H2O + 4 H(+)(in) = ADP + phosphate + 5 H(+)(out). Its function is as follows. Produces ATP from ADP in the presence of a proton gradient across the membrane. The alpha chain is a regulatory subunit. The polypeptide is ATP synthase subunit alpha (Bartonella henselae (strain ATCC 49882 / DSM 28221 / CCUG 30454 / Houston 1) (Rochalimaea henselae)).